The sequence spans 89 residues: Defensin-like protein 147 (89 aa).

The first 24 residues, 1-24 (MKKIFQLSFTVFIIFISLVLGVVG), serve as a signal peptide directing secretion. 4 disulfide bridges follow: Cys34–Cys82, Cys46–Cys66, Cys51–Cys79, and Cys55–Cys81.

It belongs to the DEFL family. As to expression, expressed in flower buds, but not in stems, roots or rosette leaves.

The protein localises to the secreted. This Arabidopsis thaliana (Mouse-ear cress) protein is Defensin-like protein 147 (LCR1).